The sequence spans 29 residues: GLWSKIKEAGKAAVKAAGKAALGAVADSV.

The residue at position 29 (Val-29) is a Valine amide.

In terms of tissue distribution, expressed by the skin glands.

The protein resides in the secreted. Has antimicrobial activity. The chain is Dermaseptin-J6 from Phasmahyla jandaia (Jandaia leaf frog).